The sequence spans 570 residues: Periplasmic trehalase (570 aa).

Residues 1-34 (MIPPEIRRSVLLQKAIKLALAGTLLTFASFSATA) form the signal peptide. Residues R159, 166 to 167 (WD), N203, 212 to 214 (RSQ), 284 to 286 (RPE), and G317 each bind substrate. Catalysis depends on proton donor/acceptor residues D319 and E503. E518 lines the substrate pocket. A disordered region spans residues 544-570 (KPCDSVPSTRPASLSATPTKTPSAATQ). A compositionally biased stretch (low complexity) spans 554-570 (PASLSATPTKTPSAATQ).

It belongs to the glycosyl hydrolase 37 family. As to quaternary structure, monomer.

It is found in the periplasm. It carries out the reaction alpha,alpha-trehalose + H2O = alpha-D-glucose + beta-D-glucose. Its function is as follows. Provides the cells with the ability to utilize trehalose at high osmolarity by splitting it into glucose molecules that can subsequently be taken up by the phosphotransferase-mediated uptake system. This Salmonella choleraesuis (strain SC-B67) protein is Periplasmic trehalase.